Reading from the N-terminus, the 149-residue chain is Transcriptional repressor NrdR (149 aa).

Residues 3–34 (CPFCAAVDTKVIDSRLVGDGSQVRRRRQCLVC) fold into a zinc finger. Residues 49-139 (PRVIKSDEVR…VYRSFEDIRE (91 aa)) enclose the ATP-cone domain.

The protein belongs to the NrdR family. Requires Zn(2+) as cofactor.

In terms of biological role, negatively regulates transcription of bacterial ribonucleotide reductase nrd genes and operons by binding to NrdR-boxes. The chain is Transcriptional repressor NrdR from Serratia proteamaculans (strain 568).